The sequence spans 372 residues: Glutamate 5-kinase (372 aa).

Lys14 contacts ATP. Residues Ser54, Asp141, and Asn153 each contribute to the substrate site. ATP is bound at residue 173–174 (TD). Residues 280-358 (RGTLVLDAGA…EAIESILGYS (79 aa)) enclose the PUA domain.

It belongs to the glutamate 5-kinase family.

Its subcellular location is the cytoplasm. The enzyme catalyses L-glutamate + ATP = L-glutamyl 5-phosphate + ADP. It functions in the pathway amino-acid biosynthesis; L-proline biosynthesis; L-glutamate 5-semialdehyde from L-glutamate: step 1/2. Functionally, catalyzes the transfer of a phosphate group to glutamate to form L-glutamate 5-phosphate. This Pseudomonas putida (strain ATCC 700007 / DSM 6899 / JCM 31910 / BCRC 17059 / LMG 24140 / F1) protein is Glutamate 5-kinase.